The following is a 565-amino-acid chain: Dihydroxy-acid dehydratase (565 aa).

D80 is a Mg(2+) binding site. A [2Fe-2S] cluster-binding site is contributed by C121. Residues D122 and K123 each contribute to the Mg(2+) site. K123 carries the N6-carboxylysine modification. Position 194 (C194) interacts with [2Fe-2S] cluster. Residue E447 coordinates Mg(2+). The active-site Proton acceptor is the S473.

Belongs to the IlvD/Edd family. Homodimer. It depends on [2Fe-2S] cluster as a cofactor. Requires Mg(2+) as cofactor.

It carries out the reaction (2R)-2,3-dihydroxy-3-methylbutanoate = 3-methyl-2-oxobutanoate + H2O. The catalysed reaction is (2R,3R)-2,3-dihydroxy-3-methylpentanoate = (S)-3-methyl-2-oxopentanoate + H2O. It participates in amino-acid biosynthesis; L-isoleucine biosynthesis; L-isoleucine from 2-oxobutanoate: step 3/4. It functions in the pathway amino-acid biosynthesis; L-valine biosynthesis; L-valine from pyruvate: step 3/4. Functionally, functions in the biosynthesis of branched-chain amino acids. Catalyzes the dehydration of (2R,3R)-2,3-dihydroxy-3-methylpentanoate (2,3-dihydroxy-3-methylvalerate) into 2-oxo-3-methylpentanoate (2-oxo-3-methylvalerate) and of (2R)-2,3-dihydroxy-3-methylbutanoate (2,3-dihydroxyisovalerate) into 2-oxo-3-methylbutanoate (2-oxoisovalerate), the penultimate precursor to L-isoleucine and L-valine, respectively. The protein is Dihydroxy-acid dehydratase of Pelodictyon phaeoclathratiforme (strain DSM 5477 / BU-1).